The chain runs to 287 residues: Large ribosomal subunit protein uL2 (287 aa).

A disordered region spans residues Arg-221–Ser-287. Basic residues predominate over residues Lys-258–Ser-287.

The protein belongs to the universal ribosomal protein uL2 family. In terms of assembly, part of the 50S ribosomal subunit. Forms a bridge to the 30S subunit in the 70S ribosome.

One of the primary rRNA binding proteins. Required for association of the 30S and 50S subunits to form the 70S ribosome, for tRNA binding and peptide bond formation. It has been suggested to have peptidyltransferase activity; this is somewhat controversial. Makes several contacts with the 16S rRNA in the 70S ribosome. This is Large ribosomal subunit protein uL2 from Prochlorococcus marinus (strain AS9601).